The following is a 156-amino-acid chain: Probable succinate transporter subunit YjjB (156 aa).

A run of 4 helical transmembrane segments spans residues 7-27 (WALLQDMVLAAVPALGFAMVF), 54-74 (FGMNIEWASFLAAILIGIIGI), 86-106 (VFTVAAVIPMFPGISAYTAMI), and 128-148 (FLKASFIVGALSIGLSLPGIW).

The protein belongs to the ThrE exporter (TC 2.A.79) family. As to quaternary structure, the transporter is composed of YjjB and YjjP.

It localises to the cell inner membrane. Functionally, involved in succinate export with YjjP. Both proteins are required for export. The sequence is that of Probable succinate transporter subunit YjjB from Pectobacterium atrosepticum (strain SCRI 1043 / ATCC BAA-672) (Erwinia carotovora subsp. atroseptica).